The following is a 129-amino-acid chain: MARKQVSRKRRVKKNIENGVAHIRSTFNNTIVTITDEFGNALSWSSAGALGFKGSKKSTPFAAQMASETASKTAMEHGLKSVEVTVKGPGPGRESAIRALQSAGLEVTAIRDVTPVPHNGCRPPKRRRV.

The protein belongs to the universal ribosomal protein uS11 family. In terms of assembly, part of the 30S ribosomal subunit. Interacts with proteins S7 and S18. Binds to IF-3.

Functionally, located on the platform of the 30S subunit, it bridges several disparate RNA helices of the 16S rRNA. Forms part of the Shine-Dalgarno cleft in the 70S ribosome. The polypeptide is Small ribosomal subunit protein uS11 (Staphylococcus saprophyticus subsp. saprophyticus (strain ATCC 15305 / DSM 20229 / NCIMB 8711 / NCTC 7292 / S-41)).